A 471-amino-acid chain; its full sequence is COP9 signalosome complex subunit 1 (471 aa).

In terms of domain architecture, PCI spans 249 to 411; that stretch reads CFLLASFDHC…KILYARDVDQ (163 aa). Residues 445 to 471 form a disordered region; that stretch reads HVKSPPREGSQGELTPANSQSRMSTNM. Phosphoserine occurs at positions 448 and 454. Positions 456–471 are enriched in polar residues; the sequence is GELTPANSQSRMSTNM. Position 459 is a phosphothreonine (T459). S463 is subject to Phosphoserine.

It belongs to the CSN1 family. As to quaternary structure, component of the CSN complex, composed of COPS1/GPS1, COPS2, COPS3, COPS4, COPS5, COPS6, COPS7 (COPS7A or COPS7B), COPS8 and COPS9. In the complex, it probably interacts directly with COPS2, COPS3, COPS4 and COPS5. Interacts directly with inositol kinase ITPK1. Interacts with CAPN8. Interacts with USP48. Interacts with ASB4; this interaction negatively regulates GPS1. As to expression, expressed in the base region of the oxyntic and pyloric mucosae.

The protein localises to the cytoplasm. The protein resides in the nucleus. In terms of biological role, essential component of the COP9 signalosome complex (CSN), a complex involved in various cellular and developmental processes. The CSN complex is an essential regulator of the ubiquitin (Ubl) conjugation pathway by mediating the deneddylation of the cullin subunits of SCF-type E3 ligase complexes, leading to decrease the Ubl ligase activity of SCF-type complexes such as SCF, CSA or DDB2. The complex is also involved in phosphorylation of p53/TP53, c-jun/JUN, IkappaBalpha/NFKBIA, ITPK1 and IRF8/ICSBP, possibly via its association with CK2 and PKD kinases. CSN-dependent phosphorylation of TP53 and JUN promotes and protects degradation by the Ubl system, respectively. Suppresses G-protein- and mitogen-activated protein kinase-mediated signal transduction. The polypeptide is COP9 signalosome complex subunit 1 (Gps1) (Mus musculus (Mouse)).